The sequence spans 329 residues: Sulfate-binding protein (329 aa).

The N-terminal stretch at 1-19 (MNKWGVGLTFLLAATSVMA) is a signal peptide.

Belongs to the prokaryotic sulfate-binding protein family.

It is found in the periplasm. This protein specifically binds sulfate and is involved in its transmembrane transport. The sequence is that of Sulfate-binding protein (sbp) from Escherichia coli (strain K12).